Reading from the N-terminus, the 472-residue chain is tRNA-2-methylthio-N(6)-dimethylallyladenosine synthase (472 aa).

In terms of domain architecture, MTTase N-terminal spans 22–138 (RSYWITTFGC…LETLLQQVDS (117 aa)). The [4Fe-4S] cluster site is built by Cys-31, Cys-67, Cys-101, Cys-173, Cys-177, and Cys-180. The Radical SAM core domain maps to 159–396 (RDSAICGWVN…NALVERNARE (238 aa)). Residues 399–467 (IRYQGRTEEV…SFSLSGTPLP (69 aa)) enclose the TRAM domain.

Belongs to the methylthiotransferase family. MiaB subfamily. Monomer. The cofactor is [4Fe-4S] cluster.

It is found in the cytoplasm. It carries out the reaction N(6)-dimethylallyladenosine(37) in tRNA + (sulfur carrier)-SH + AH2 + 2 S-adenosyl-L-methionine = 2-methylsulfanyl-N(6)-dimethylallyladenosine(37) in tRNA + (sulfur carrier)-H + 5'-deoxyadenosine + L-methionine + A + S-adenosyl-L-homocysteine + 2 H(+). Its function is as follows. Catalyzes the methylthiolation of N6-(dimethylallyl)adenosine (i(6)A), leading to the formation of 2-methylthio-N6-(dimethylallyl)adenosine (ms(2)i(6)A) at position 37 in tRNAs that read codons beginning with uridine. This is tRNA-2-methylthio-N(6)-dimethylallyladenosine synthase from Synechococcus sp. (strain CC9902).